Here is a 211-residue protein sequence, read N- to C-terminus: Redox-sensing transcriptional repressor Rex (211 aa).

Positions 17 to 56 (LYYRLVSILKGKGIDRVNSKTISEALQIDSATIRRDFSYF) form a DNA-binding region, H-T-H motif. Position 91-96 (91-96 (GIGNLG)) interacts with NAD(+).

It belongs to the transcriptional regulatory Rex family. In terms of assembly, homodimer.

The protein localises to the cytoplasm. Modulates transcription in response to changes in cellular NADH/NAD(+) redox state. The polypeptide is Redox-sensing transcriptional repressor Rex (Staphylococcus epidermidis (strain ATCC 12228 / FDA PCI 1200)).